The primary structure comprises 185 residues: MISDIRKDAEVRMEKCVEAFKNQISKVRTGRASPSLLDGIIVEYYGTPTPLRQLASVTVEDTRTLKINVFDRSLGPAVEKAIMASDLGLNPSSAGTDIRVPLPALTEERRKELIKVVRGEAEGARVAVRNVRRDANDKVKALLKDKEISEDDDRRSQDDVQKLTDAAIKKLDAALADKEAELMQF.

Belongs to the RRF family.

The protein localises to the cytoplasm. Responsible for the release of ribosomes from messenger RNA at the termination of protein biosynthesis. May increase the efficiency of translation by recycling ribosomes from one round of translation to another. In Enterobacter sp. (strain 638), this protein is Ribosome-recycling factor.